Here is a 374-residue protein sequence, read N- to C-terminus: Pyruvate dehydrogenase E1 component subunit beta-1, mitochondrial (374 aa).

Residues 1-34 (MLGIARRRLGSGCALGQLMQALRPAAAAAAARTY) constitute a mitochondrion transit peptide. Glutamate 97 serves as a coordination point for thiamine diphosphate. K(+)-binding residues include isoleucine 150, alanine 198, isoleucine 199, and aspartate 201.

As to quaternary structure, tetramer of 2 alpha and 2 beta subunits. Thiamine diphosphate is required as a cofactor.

The protein localises to the mitochondrion matrix. The catalysed reaction is N(6)-[(R)-lipoyl]-L-lysyl-[protein] + pyruvate + H(+) = N(6)-[(R)-S(8)-acetyldihydrolipoyl]-L-lysyl-[protein] + CO2. In terms of biological role, the pyruvate dehydrogenase complex catalyzes the overall conversion of pyruvate to acetyl-CoA and CO(2). It contains multiple copies of three enzymatic components: pyruvate dehydrogenase (E1), dihydrolipoamide acetyltransferase (E2) and lipoamide dehydrogenase (E3). This is Pyruvate dehydrogenase E1 component subunit beta-1, mitochondrial from Oryza sativa subsp. japonica (Rice).